Consider the following 1379-residue polypeptide: DNA-directed RNA polymerase subunit beta (1379 aa).

It belongs to the RNA polymerase beta chain family. In terms of assembly, the RNAP catalytic core consists of 2 alpha, 1 beta, 1 beta' and 1 omega subunit. When a sigma factor is associated with the core the holoenzyme is formed, which can initiate transcription.

The catalysed reaction is RNA(n) + a ribonucleoside 5'-triphosphate = RNA(n+1) + diphosphate. Its function is as follows. DNA-dependent RNA polymerase catalyzes the transcription of DNA into RNA using the four ribonucleoside triphosphates as substrates. This chain is DNA-directed RNA polymerase subunit beta, found in Ruegeria sp. (strain TM1040) (Silicibacter sp.).